We begin with the raw amino-acid sequence, 372 residues long: Chaperone protein DnaJ (372 aa).

Positions 5–70 (DYYDLLEVGR…EKRAGYDRYG (66 aa)) constitute a J domain. The CR-type zinc-finger motif lies at 134–212 (GIQAPIHYVT…CGGSGRRRDE (79 aa)). Positions 147, 150, 164, 167, 186, 189, 200, and 203 each coordinate Zn(2+). 4 CXXCXGXG motif repeats span residues 147–154 (CDTCQGTG), 164–171 (CHTCQGSG), 186–193 (CTTCYGEG), and 200–207 (CKKCGGSG).

The protein belongs to the DnaJ family. Homodimer. The cofactor is Zn(2+).

The protein localises to the cytoplasm. In terms of biological role, participates actively in the response to hyperosmotic and heat shock by preventing the aggregation of stress-denatured proteins and by disaggregating proteins, also in an autonomous, DnaK-independent fashion. Unfolded proteins bind initially to DnaJ; upon interaction with the DnaJ-bound protein, DnaK hydrolyzes its bound ATP, resulting in the formation of a stable complex. GrpE releases ADP from DnaK; ATP binding to DnaK triggers the release of the substrate protein, thus completing the reaction cycle. Several rounds of ATP-dependent interactions between DnaJ, DnaK and GrpE are required for fully efficient folding. Also involved, together with DnaK and GrpE, in the DNA replication of plasmids through activation of initiation proteins. The sequence is that of Chaperone protein DnaJ from Wolbachia sp. subsp. Drosophila simulans (strain wRi).